A 306-amino-acid polypeptide reads, in one-letter code: Palmitoyl-protein thioesterase ABHD10, mitochondrial (306 aa).

A mitochondrion-targeting transit peptide spans 1-52; the sequence is MAGVGLAAVPAWVPCRRWGLAAVTFGFHHGLSTLLARKTERAPQWLRACRHK. Residues 78-177 form the AB hydrolase-1 domain; sequence IIFIPGYISN…KVVALVGVAT (100 aa). Active-site charge relay system residues include serine 152, aspartate 249, and histidine 279.

This sequence belongs to the AB hydrolase superfamily.

The protein resides in the mitochondrion. It catalyses the reaction S-hexadecanoyl-L-cysteinyl-[protein] + H2O = L-cysteinyl-[protein] + hexadecanoate + H(+). It carries out the reaction mycophenolic acid O-acyl-beta-D-glucuronide + H2O = mycophenolate + D-glucuronate + H(+). Inhibited by palmostatin-B. Its function is as follows. Acts as an acyl-protein thioesterase that hydrolyzes fatty acids from acylated residues in proteins. Regulates the mitochondrial S-depalmitoylation of the nucleophilic active site residue of peroxiredoxin-5/PRDX5, a key antioxidant protein, therefore modulating mitochondrial antioxidant ability. Also catalyzes the deglucuronidation of mycophenolic acid acyl-glucuronide, an active metabolite of the immunosuppressant drug mycophenolate. This Bos taurus (Bovine) protein is Palmitoyl-protein thioesterase ABHD10, mitochondrial (ABHD10).